A 501-amino-acid polypeptide reads, in one-letter code: Glycerol kinase (501 aa).

Threonine 16 contributes to the ADP binding site. ATP is bound by residues threonine 16, threonine 17, and serine 18. Position 16 (threonine 16) interacts with sn-glycerol 3-phosphate. An ADP-binding site is contributed by arginine 20. Residues arginine 84, glutamate 85, tyrosine 135, and aspartate 242 each coordinate sn-glycerol 3-phosphate. Glycerol contacts are provided by arginine 84, glutamate 85, tyrosine 135, aspartate 242, and glutamine 243. Residues threonine 264 and glycine 307 each coordinate ADP. 4 residues coordinate ATP: threonine 264, glycine 307, glutamine 311, and glycine 408. ADP is bound at residue glycine 408.

It belongs to the FGGY kinase family.

The catalysed reaction is glycerol + ATP = sn-glycerol 3-phosphate + ADP + H(+). The protein operates within polyol metabolism; glycerol degradation via glycerol kinase pathway; sn-glycerol 3-phosphate from glycerol: step 1/1. In terms of biological role, key enzyme in the regulation of glycerol uptake and metabolism. Catalyzes the phosphorylation of glycerol to yield sn-glycerol 3-phosphate. In Saccharolobus islandicus (strain M.14.25 / Kamchatka #1) (Sulfolobus islandicus), this protein is Glycerol kinase.